The primary structure comprises 346 residues: UDP-N-acetylenolpyruvoylglucosamine reductase (346 aa).

Residues 18 to 189 enclose the FAD-binding PCMH-type domain; that stretch reads LRAQARAFIA…VSVVFALKTH (172 aa). Arg165 is a catalytic residue. The Proton donor role is filled by Ser240. Glu336 is an active-site residue.

The protein belongs to the MurB family. Requires FAD as cofactor.

It is found in the cytoplasm. The catalysed reaction is UDP-N-acetyl-alpha-D-muramate + NADP(+) = UDP-N-acetyl-3-O-(1-carboxyvinyl)-alpha-D-glucosamine + NADPH + H(+). It participates in cell wall biogenesis; peptidoglycan biosynthesis. Functionally, cell wall formation. This chain is UDP-N-acetylenolpyruvoylglucosamine reductase, found in Neisseria meningitidis serogroup B (strain ATCC BAA-335 / MC58).